Here is a 476-residue protein sequence, read N- to C-terminus: Arginine biosynthesis bifunctional protein ArgJ, mitochondrial (476 aa).

6 residues coordinate substrate: T193, K219, T237, E337, N471, and S476. T237 functions as the Nucleophile in the catalytic mechanism.

This sequence belongs to the ArgJ family. As to quaternary structure, heterodimer of an alpha and a beta chain. In terms of processing, the alpha and beta chains are autoproteolytically processed from a single precursor protein within the mitochondrion.

The protein resides in the mitochondrion matrix. The enzyme catalyses N(2)-acetyl-L-ornithine + L-glutamate = N-acetyl-L-glutamate + L-ornithine. The catalysed reaction is L-glutamate + acetyl-CoA = N-acetyl-L-glutamate + CoA + H(+). The protein operates within amino-acid biosynthesis; L-arginine biosynthesis; L-ornithine and N-acetyl-L-glutamate from L-glutamate and N(2)-acetyl-L-ornithine (cyclic): step 1/1. Its pathway is amino-acid biosynthesis; L-arginine biosynthesis; N(2)-acetyl-L-ornithine from L-glutamate: step 1/4. Functionally, catalyzes two activities which are involved in the cyclic version of arginine biosynthesis: the synthesis of acetylglutamate from glutamate and acetyl-CoA, and of ornithine by transacetylation between acetylornithine and glutamate. The sequence is that of Arginine biosynthesis bifunctional protein ArgJ, mitochondrial from Cryptococcus neoformans var. neoformans serotype D (strain JEC21 / ATCC MYA-565) (Filobasidiella neoformans).